We begin with the raw amino-acid sequence, 477 residues long: ATP synthase subunit beta (477 aa).

163 to 170 lines the ATP pocket; sequence GGAGVGKT.

Belongs to the ATPase alpha/beta chains family. As to quaternary structure, F-type ATPases have 2 components, CF(1) - the catalytic core - and CF(0) - the membrane proton channel. CF(1) has five subunits: alpha(3), beta(3), gamma(1), delta(1), epsilon(1). CF(0) has four main subunits: a(1), b(1), b'(1) and c(9-12).

It is found in the cellular thylakoid membrane. It catalyses the reaction ATP + H2O + 4 H(+)(in) = ADP + phosphate + 5 H(+)(out). Functionally, produces ATP from ADP in the presence of a proton gradient across the membrane. The catalytic sites are hosted primarily by the beta subunits. The chain is ATP synthase subunit beta from Synechococcus sp. (strain JA-2-3B'a(2-13)) (Cyanobacteria bacterium Yellowstone B-Prime).